A 233-amino-acid polypeptide reads, in one-letter code: Adenosine 5'-phosphosulfate reductase (233 aa).

Cysteine 120, cysteine 121, cysteine 203, and cysteine 206 together coordinate [4Fe-4S] cluster. Cysteine 229 functions as the Nucleophile; cysteine thiosulfonate intermediate in the catalytic mechanism.

The protein belongs to the PAPS reductase family. CysH subfamily. The cofactor is [4Fe-4S] cluster.

The protein localises to the cytoplasm. It carries out the reaction [thioredoxin]-disulfide + sulfite + AMP + 2 H(+) = adenosine 5'-phosphosulfate + [thioredoxin]-dithiol. The protein operates within sulfur metabolism; hydrogen sulfide biosynthesis; sulfite from sulfate. Functionally, catalyzes the formation of sulfite from adenosine 5'-phosphosulfate (APS) using thioredoxin as an electron donor. The sequence is that of Adenosine 5'-phosphosulfate reductase from Bacillus velezensis (strain DSM 23117 / BGSC 10A6 / LMG 26770 / FZB42) (Bacillus amyloliquefaciens subsp. plantarum).